A 211-amino-acid polypeptide reads, in one-letter code: MTQAHLTVVDHPLVQHKLTLMRDKTTSTAGFRRLLREISLLLAYEVTRELEMTTIRIDTPLCEMEAPTLEGKKLALISILRAGNGLMDGILELIPAARVGFIGLYRDPETLQPVQYYSKVPKELDARMTIVVDPMLATGNSSVAAIDLLKAAGARNLRFLCLLASPEGVERMREAHPDVPIVTAALDERLDEHGYIVPGLGDAGDRMFGTK.

5-phospho-alpha-D-ribose 1-diphosphate is bound by residues Arg81, Arg106, and 133–141 (DPMLATGNS). Residues Ile196 and 201–203 (GDA) each bind uracil. Asp202 serves as a coordination point for 5-phospho-alpha-D-ribose 1-diphosphate.

The protein belongs to the UPRTase family. Mg(2+) serves as cofactor.

It carries out the reaction UMP + diphosphate = 5-phospho-alpha-D-ribose 1-diphosphate + uracil. The protein operates within pyrimidine metabolism; UMP biosynthesis via salvage pathway; UMP from uracil: step 1/1. Allosterically activated by GTP. In terms of biological role, catalyzes the conversion of uracil and 5-phospho-alpha-D-ribose 1-diphosphate (PRPP) to UMP and diphosphate. This Paracoccus denitrificans (strain Pd 1222) protein is Uracil phosphoribosyltransferase.